The primary structure comprises 132 residues: Seminal vesicle protein SVP-2 (132 aa).

Positions 1–14 (HLALLLILENQASG) are cleaved as a signal peptide. The segment covering 33–81 (HKEEVEESESSRGQDFDKRRFWEKDDPTGEHVSVRHEHLEKSHIRFKED) has biased composition (basic and acidic residues). Disordered regions lie at residues 33–104 (HKEE…LKRH) and 113–132 (VEDQALANGADPGKSNMQRV). A propeptide spanning residues 104–132 (HDAMEELVSVEDQALANGADPGKSNMQRV) is cleaved from the precursor.

This sequence to the SVP-1/-3/-4 precursor, particularly in regions where protein processing must occur.

It localises to the secreted. In Cavia porcellus (Guinea pig), this protein is Seminal vesicle protein SVP-2.